The chain runs to 67 residues: MARITVEDCLEKIPNRFQLVLAATYRARMLSQGHAAKIESKNKPGVTALREIAEGKIGLEMLKKVPS.

The protein belongs to the RNA polymerase subunit omega family. In terms of assembly, the RNAP catalytic core consists of 2 alpha, 1 beta, 1 beta' and 1 omega subunit. When a sigma factor is associated with the core the holoenzyme is formed, which can initiate transcription.

The catalysed reaction is RNA(n) + a ribonucleoside 5'-triphosphate = RNA(n+1) + diphosphate. In terms of biological role, promotes RNA polymerase assembly. Latches the N- and C-terminal regions of the beta' subunit thereby facilitating its interaction with the beta and alpha subunits. The sequence is that of DNA-directed RNA polymerase subunit omega from Polaromonas sp. (strain JS666 / ATCC BAA-500).